Here is a 585-residue protein sequence, read N- to C-terminus: Arginine--tRNA ligase (585 aa).

Positions 131-141 match the 'HIGH' region motif; sequence ANPTGPMHVGH.

Belongs to the class-I aminoacyl-tRNA synthetase family. As to quaternary structure, monomer.

It is found in the cytoplasm. It catalyses the reaction tRNA(Arg) + L-arginine + ATP = L-arginyl-tRNA(Arg) + AMP + diphosphate. The sequence is that of Arginine--tRNA ligase from Bartonella quintana (strain Toulouse) (Rochalimaea quintana).